A 380-amino-acid chain; its full sequence is tRNA-specific 2-thiouridylase MnmA (380 aa).

Residues 25-32 and methionine 51 each bind ATP; that span reads AMSGGVDS. Cysteine 119 serves as the catalytic Nucleophile. The cysteines at positions 119 and 216 are disulfide-linked. Residue glycine 143 coordinates ATP. Positions 166–168 are interaction with tRNA; sequence KDQ. The Cysteine persulfide intermediate role is filled by cysteine 216. The tract at residues 320 to 321 is interaction with tRNA; the sequence is RY.

Belongs to the MnmA/TRMU family.

Its subcellular location is the cytoplasm. The catalysed reaction is S-sulfanyl-L-cysteinyl-[protein] + uridine(34) in tRNA + AH2 + ATP = 2-thiouridine(34) in tRNA + L-cysteinyl-[protein] + A + AMP + diphosphate + H(+). Its function is as follows. Catalyzes the 2-thiolation of uridine at the wobble position (U34) of tRNA, leading to the formation of s(2)U34. The protein is tRNA-specific 2-thiouridylase MnmA of Deinococcus radiodurans (strain ATCC 13939 / DSM 20539 / JCM 16871 / CCUG 27074 / LMG 4051 / NBRC 15346 / NCIMB 9279 / VKM B-1422 / R1).